A 565-amino-acid polypeptide reads, in one-letter code: 4-coumarate--CoA ligase-like 2 (565 aa).

Serine 221, serine 222, glycine 223, threonine 224, threonine 225, and lysine 229 together coordinate ATP. Residue phenylalanine 265 participates in (E)-4-coumaroyl-AMP binding. Residue lysine 286 participates in CoA binding. An SBD1 region spans residues 288 to 359 (DMAKLLSAVE…ENYPKVKILQ (72 aa)). Glycine 337, glutamine 359, glycine 360, and threonine 364 together coordinate (E)-4-coumaroyl-AMP. ATP contacts are provided by glutamine 359, glycine 360, threonine 364, aspartate 445, and arginine 460. The SBD2 stretch occupies residues 360 to 424 (GYGLTESTAI…IRSPTVMKGY (65 aa)). Residues lysine 462 and lysine 466 each coordinate (E)-4-coumaroyl-AMP. Glycine 469 is a binding site for CoA. Residue lysine 551 coordinates ATP. The Microbody targeting signal motif lies at 563–565 (SKL).

The protein belongs to the ATP-dependent AMP-binding enzyme family. Mg(2+) is required as a cofactor.

The protein localises to the peroxisome. It carries out the reaction (E)-4-coumarate + ATP + CoA = (E)-4-coumaroyl-CoA + AMP + diphosphate. The catalysed reaction is (E)-4-coumarate + ATP + H(+) = (E)-4-coumaroyl-AMP + diphosphate. The enzyme catalyses (E)-4-coumaroyl-AMP + CoA = (E)-4-coumaroyl-CoA + AMP + H(+). Functionally, carboxylate--CoA ligase that may use 4-coumarate as substrate. Follows a two-step reaction mechanism, wherein the carboxylate substrate first undergoes adenylation by ATP, followed by a thioesterification in the presence of CoA to yield the final CoA thioester. The protein is 4-coumarate--CoA ligase-like 2 of Arabidopsis thaliana (Mouse-ear cress).